We begin with the raw amino-acid sequence, 525 residues long: MTDNIHKHRILILDFGSQYTQLVARRVRELGVYCELWAWDVTEEQIRGFNPNGIILSGGPESTTEENSPRAPEYVFNAGVPVLGVCYGMQTMAMQLGGHVEGSNEREFGYAQVEVKTDSALVRGIEDALSADGNPLLDVWMSHGDKVTAIPSDFVTVASTETCPFAIMANEEKRFYGVQFHPEVTHTRQGLRMLERFVRDICECEALWTPAKIIDDAVERIRQQVGNDRVILGLSGGVDSSVTAMLLHRAIGDRLTCVFVDNGLLRLNEAEQVMDMFGDHFGLNIVHVPAEARFLDALAGIDEPEAKRKTIGRVFVEVFDEEALKLEDVKWLAQGTIYPDVIESAASATGKAHVIKSHHNVGGLPKEMKMGLVEPLKELFKDEVRKIGLELGLPYDMLYRHPFPGPGLGVRVLGEVKKEYCDLLRRADAIFIEELRRADLYDKVSQAFAVFLPVRSVGVMGDGRKYDWVVSLRAVETIDFMTAHWAHLPYDFLGRVSNRIINEINGISRVVYDISGKPPATIEWE.

The Glutamine amidotransferase type-1 domain occupies 9 to 207 (RILILDFGSQ…VRDICECEAL (199 aa)). Cys86 acts as the Nucleophile in catalysis. Residues His181 and Glu183 contribute to the active site. Positions 208-400 (WTPAKIIDDA…LGLPYDMLYR (193 aa)) constitute a GMPS ATP-PPase domain. 235 to 241 (SGGVDSS) is an ATP binding site.

In terms of assembly, homodimer.

It carries out the reaction XMP + L-glutamine + ATP + H2O = GMP + L-glutamate + AMP + diphosphate + 2 H(+). It functions in the pathway purine metabolism; GMP biosynthesis; GMP from XMP (L-Gln route): step 1/1. Its function is as follows. Catalyzes the synthesis of GMP from XMP. In Cronobacter sakazakii (strain ATCC BAA-894) (Enterobacter sakazakii), this protein is GMP synthase [glutamine-hydrolyzing].